The following is a 297-amino-acid chain: Heme A synthase (297 aa).

Residues 1–6 lie on the Cytoplasmic side of the membrane; sequence MNRKLS. The chain crosses the membrane as a helical span at residues 7–27; that stretch reads IFSAFVTFTMMIVLLMGGTVT. Residues 28-62 are Extracellular-facing; it reads KTDSGNGCGTDWPLCHGELIPTNPSVETMIEYSHR. An intrachain disulfide couples Cys35 to Cys42. Glu58 is an active-site residue. His61 serves as a coordination point for heme o. Residues 63–83 form a helical membrane-spanning segment; that stretch reads AVTGVVGLLIIALCLWTLVAF. Residues 84–90 lie on the Cytoplasmic side of the membrane; it reads KDRLDIK. A helical transmembrane segment spans residues 91–111; the sequence is IFAFLAFIFMLIQSIVGAGAV. Topologically, residues 112–121 are extracellular; the sequence is VWQQSDLVMA. The helical transmembrane segment at 122–142 threads the bilayer; it reads LHFGISLISFASLLILTILIM. His123 lines the heme o pocket. Topologically, residues 143–160 are cytoplasmic; the sequence is ERSGQEFRESVPAFLRKL. The helical transmembrane segment at 161–181 threads the bilayer; the sequence is LYGLLIYTLIVVYTGAFVRHV. Residues 182 to 201 are Extracellular-facing; that stretch reads GATYACVGWPVCSQPTMTFE. Residues Cys187 and Cys193 are joined by a disulfide bond. The chain crosses the membrane as a helical span at residues 202–222; the sequence is AWVQMIHRILAGLLFFYTLFV. His208 contributes to the heme b binding site. At 223 to 236 the chain is on the cytoplasmic side; that stretch reads HYTAIRLKHRTSRT. Residues 237 to 257 traverse the membrane as a helical segment; sequence GMLFATFFISCQVATGAWIVL. The Extracellular portion of the chain corresponds to 258–262; sequence GGHAT. A helical membrane pass occupies residues 263-283; it reads YVPLLHAFLITCYFGVISYLA. His268 lines the heme b pocket. Residues 284–297 lie on the Cytoplasmic side of the membrane; sequence YHAFRTRKKDSRLR.

Belongs to the COX15/CtaA family. Type 1 subfamily. As to quaternary structure, interacts with CtaB. Heme b is required as a cofactor.

It localises to the cell membrane. The catalysed reaction is Fe(II)-heme o + 2 A + H2O = Fe(II)-heme a + 2 AH2. The protein operates within porphyrin-containing compound metabolism; heme A biosynthesis; heme A from heme O: step 1/1. Functionally, catalyzes the conversion of heme O to heme A by two successive hydroxylations of the methyl group at C8. The first hydroxylation forms heme I, the second hydroxylation results in an unstable dihydroxymethyl group, which spontaneously dehydrates, resulting in the formyl group of heme A. The polypeptide is Heme A synthase (Exiguobacterium sibiricum (strain DSM 17290 / CCUG 55495 / CIP 109462 / JCM 13490 / 255-15)).